The primary structure comprises 177 residues: Cytochrome c-type biogenesis protein CcmE (177 aa).

Residues 1–8 are Cytoplasmic-facing; that stretch reads MNPRRKSR. Residues 9-29 form a helical; Signal-anchor for type II membrane protein membrane-spanning segment; the sequence is LKVVMAVLSGLAVAVGLTLYA. Over 30-177 the chain is Periplasmic; that stretch reads LSQNIDLFYT…QISQPFGENK (148 aa). Residues H131 and Y135 each contribute to the heme site. The interval 134–177 is disordered; sequence NYMPPELGDQMKKQHQPMGISEADLKGKSERDATQISQPFGENK. A compositionally biased stretch (basic and acidic residues) spans 156 to 166; the sequence is ADLKGKSERDA. Positions 167-177 are enriched in polar residues; the sequence is TQISQPFGENK.

Belongs to the CcmE/CycJ family.

The protein localises to the cell inner membrane. Functionally, heme chaperone required for the biogenesis of c-type cytochromes. Transiently binds heme delivered by CcmC and transfers the heme to apo-cytochromes in a process facilitated by CcmF and CcmH. This is Cytochrome c-type biogenesis protein CcmE from Glaesserella parasuis serovar 5 (strain SH0165) (Haemophilus parasuis).